Consider the following 361-residue polypeptide: Histidinol-phosphate aminotransferase (361 aa).

Residue K219 is modified to N6-(pyridoxal phosphate)lysine.

It belongs to the class-II pyridoxal-phosphate-dependent aminotransferase family. Histidinol-phosphate aminotransferase subfamily. In terms of assembly, homodimer. Pyridoxal 5'-phosphate is required as a cofactor.

The enzyme catalyses L-histidinol phosphate + 2-oxoglutarate = 3-(imidazol-4-yl)-2-oxopropyl phosphate + L-glutamate. It functions in the pathway amino-acid biosynthesis; L-histidine biosynthesis; L-histidine from 5-phospho-alpha-D-ribose 1-diphosphate: step 7/9. This is Histidinol-phosphate aminotransferase from Cereibacter sphaeroides (strain KD131 / KCTC 12085) (Rhodobacter sphaeroides).